The chain runs to 342 residues: Isopentenyl-diphosphate delta-isomerase (342 aa).

Residue 11–12 participates in substrate binding; sequence RK. FMN-binding positions include S68, 69–71, S99, and N127; that span reads SMT. 99–101 lines the substrate pocket; sequence SMR. Q162 provides a ligand contact to substrate. E163 is a Mg(2+) binding site. Residues K194, T224, 274 to 276, and 295 to 296 contribute to the FMN site; these read GLK and AG.

The protein belongs to the IPP isomerase type 2 family. In terms of assembly, homooctamer. Dimer of tetramers. Requires FMN as cofactor. NADPH is required as a cofactor. Mg(2+) serves as cofactor.

It is found in the cytoplasm. It carries out the reaction isopentenyl diphosphate = dimethylallyl diphosphate. Its function is as follows. Involved in the biosynthesis of isoprenoids. Catalyzes the 1,3-allylic rearrangement of the homoallylic substrate isopentenyl (IPP) to its allylic isomer, dimethylallyl diphosphate (DMAPP). The polypeptide is Isopentenyl-diphosphate delta-isomerase (Rickettsia peacockii (strain Rustic)).